The sequence spans 229 residues: Large ribosomal subunit protein uL1 (229 aa).

This sequence belongs to the universal ribosomal protein uL1 family. Part of the 50S ribosomal subunit.

Binds directly to 23S rRNA. The L1 stalk is quite mobile in the ribosome, and is involved in E site tRNA release. Functionally, protein L1 is also a translational repressor protein, it controls the translation of the L11 operon by binding to its mRNA. The chain is Large ribosomal subunit protein uL1 from Phenylobacterium zucineum (strain HLK1).